An 868-amino-acid chain; its full sequence is Sporulation-specific protein 75 (868 aa).

Topologically, residues Met1–Gly34 are extracellular. A glycan (N-linked (GlcNAc...) asparagine) is linked at Asn2. The helical transmembrane segment at Phe35–Ile55 threads the bilayer. Over Leu56 to Lys127 the chain is Cytoplasmic. A helical membrane pass occupies residues Leu128–His148. The Extracellular segment spans residues Tyr149 to Asn187. Asn184 is a glycosylation site (N-linked (GlcNAc...) asparagine). The chain crosses the membrane as a helical span at residues Thr188 to Ser208. At Ser209–Arg481 the chain is on the cytoplasmic side. The chain crosses the membrane as a helical span at residues Ile482–Pro502. N-linked (GlcNAc...) asparagine glycosylation occurs at Asn503. Over Asn503 to Asn527 the chain is Extracellular. The chain crosses the membrane as a helical span at residues Leu528–Leu548. At Ser549–Phe569 the chain is on the cytoplasmic side. The chain crosses the membrane as a helical span at residues Val570–Ile590. Topologically, residues Glu591–Cys611 are extracellular. A helical membrane pass occupies residues Ala612–Leu632. The Cytoplasmic segment spans residues Arg633–Thr660. The chain crosses the membrane as a helical span at residues Ser661–Tyr683. Residues Ser684–Leu692 are Extracellular-facing. A helical membrane pass occupies residues Leu693 to Tyr713. The Cytoplasmic segment spans residues Asn714 to Leu730. A helical membrane pass occupies residues Met731–Phe751. Residues Asp752–Gln753 lie on the Extracellular side of the membrane. The helical transmembrane segment at Tyr754–Ile774 threads the bilayer. At Ser775–His868 the chain is on the cytoplasmic side.

The protein belongs to the CSC1 (TC 1.A.17) family.

Its subcellular location is the membrane. Functionally, acts as an osmosensitive calcium-permeable cation channel. Required for spore wall assembly and ascus formation. The protein is Sporulation-specific protein 75 (SPO75) of Saccharomyces cerevisiae (strain ATCC 204508 / S288c) (Baker's yeast).